Consider the following 330-residue polypeptide: Ketol-acid reductoisomerase (NADP(+)) (330 aa).

A KARI N-terminal Rossmann domain is found at 1-181 (MKVFYDSDFK…GLSRAGVIQT (181 aa)). NADP(+)-binding positions include 24–27 (YGSQ), Arg-47, Ser-52, and 82–85 (DELQ). The active site involves His-107. Residue Gly-133 participates in NADP(+) binding. One can recognise a KARI C-terminal knotted domain in the interval 182-327 (TFKEETETDL…AKLRKMCGLE (146 aa)). Residues Asp-190, Glu-194, Glu-226, and Glu-230 each contribute to the Mg(2+) site. Residue Ser-251 coordinates substrate.

This sequence belongs to the ketol-acid reductoisomerase family. Requires Mg(2+) as cofactor.

It catalyses the reaction (2R)-2,3-dihydroxy-3-methylbutanoate + NADP(+) = (2S)-2-acetolactate + NADPH + H(+). The catalysed reaction is (2R,3R)-2,3-dihydroxy-3-methylpentanoate + NADP(+) = (S)-2-ethyl-2-hydroxy-3-oxobutanoate + NADPH + H(+). It functions in the pathway amino-acid biosynthesis; L-isoleucine biosynthesis; L-isoleucine from 2-oxobutanoate: step 2/4. Its pathway is amino-acid biosynthesis; L-valine biosynthesis; L-valine from pyruvate: step 2/4. In terms of biological role, involved in the biosynthesis of branched-chain amino acids (BCAA). Catalyzes an alkyl-migration followed by a ketol-acid reduction of (S)-2-acetolactate (S2AL) to yield (R)-2,3-dihydroxy-isovalerate. In the isomerase reaction, S2AL is rearranged via a Mg-dependent methyl migration to produce 3-hydroxy-3-methyl-2-ketobutyrate (HMKB). In the reductase reaction, this 2-ketoacid undergoes a metal-dependent reduction by NADPH to yield (R)-2,3-dihydroxy-isovalerate. The chain is Ketol-acid reductoisomerase (NADP(+)) from Methanococcus maripaludis (strain C5 / ATCC BAA-1333).